Reading from the N-terminus, the 632-residue chain is Chaperone protein HtpG (632 aa).

An a; substrate-binding region spans residues 1–339 (MTQQTMSFQA…SSDLPLNVSR (339 aa)). The tract at residues 340 to 559 (EILQESRDVK…DNDMSGYLQR (220 aa)) is b. Residues 560–632 (MLKAAGQSAP…TNALLLSRAA (73 aa)) form a c region.

Belongs to the heat shock protein 90 family. In terms of assembly, homodimer.

The protein resides in the cytoplasm. Functionally, molecular chaperone. Has ATPase activity. This is Chaperone protein HtpG from Burkholderia mallei (strain NCTC 10247).